We begin with the raw amino-acid sequence, 319 residues long: MKPVFLDFEQPIAELTNKIDELRFVQDESAVDISDEIHRLQKKSNDLTKSIFSKLTPAQVSQVSRHPQRPYTLDYIEALFTDFEELHGDRHFADDYAIVGGLARFNGQSVMVVGHQKGRDTKEKIRRNFGMPRPEGYRKALRLMKTAEKFGLPVMTFIDTPGAYPGIGAEERGQSEAIGKNLYELTRLHVPVLCTVIGEGGSGGALAVAVGDYVNMLQYSTYSVISPEGCASILWKTAEKAADAAQALGITADRLQKLDLVDTVIKEPLGGAHRDFGQTMKNVKAVLEKQLHEAQSIPLADLLSRRFDRIMAYGKFSEQ.

The CoA carboxyltransferase C-terminal domain occupies 39–293 (RLQKKSNDLT…KAVLEKQLHE (255 aa)).

It belongs to the AccA family. As to quaternary structure, acetyl-CoA carboxylase is a heterohexamer composed of biotin carboxyl carrier protein (AccB), biotin carboxylase (AccC) and two subunits each of ACCase subunit alpha (AccA) and ACCase subunit beta (AccD).

Its subcellular location is the cytoplasm. It carries out the reaction N(6)-carboxybiotinyl-L-lysyl-[protein] + acetyl-CoA = N(6)-biotinyl-L-lysyl-[protein] + malonyl-CoA. The protein operates within lipid metabolism; malonyl-CoA biosynthesis; malonyl-CoA from acetyl-CoA: step 1/1. In terms of biological role, component of the acetyl coenzyme A carboxylase (ACC) complex. First, biotin carboxylase catalyzes the carboxylation of biotin on its carrier protein (BCCP) and then the CO(2) group is transferred by the carboxyltransferase to acetyl-CoA to form malonyl-CoA. This is Acetyl-coenzyme A carboxylase carboxyl transferase subunit alpha from Neisseria meningitidis serogroup C (strain 053442).